An 83-amino-acid chain; its full sequence is Delta-conotoxin-like Ac6.2 (83 aa).

An N-terminal signal peptide occupies residues 1-22 (MKLTCVVIVAVLFLTAWTFVTA). A propeptide spanning residues 23 to 51 (DDSRYGLKNLFPKARHEMKNPEASKLNKR) is cleaved from the precursor. Intrachain disulfides connect Cys54–Cys69, Cys61–Cys73, and Cys68–Cys78. Pro57 and Pro65 each carry 4-hydroxyproline.

Belongs to the conotoxin O1 superfamily. In terms of tissue distribution, expressed by the venom duct.

Its subcellular location is the secreted. Functionally, delta-conotoxins bind to site 6 of voltage-gated sodium channels (Nav) and inhibit the inactivation process. The protein is Delta-conotoxin-like Ac6.2 of Conus achatinus (Little frog cone).